We begin with the raw amino-acid sequence, 279 residues long: Toxin TxP-I (279 aa).

A signal peptide spans 1 to 14; the sequence is MNLFFLFIIPTILA. Residues 15–27 constitute a propeptide that is removed on maturation; that stretch reads VKPFRSFNNISLI.

In terms of processing, contains several disulfide bonds. Posterior glands which appear to be connected with the stylet through a series of ducts.

Its subcellular location is the secreted. Its function is as follows. Part of a complex mixture of neurotoxins which P.tritici utilizes to capture prey. It has contracting-paralyzing activity in insects. In Pyemotes tritici (Straw itch mite), this protein is Toxin TxP-I.